The primary structure comprises 1285 residues: Protein cramped-like (1285 aa).

Positions 1 to 161 (MTVKLGDAGS…EGKKVRRQWE (161 aa)) are disordered. The span at 13–24 (EGLKKLGKRTAD) shows a compositional bias: basic and acidic residues. A compositionally biased stretch (pro residues) spans 57–71 (PAPPRGLPTPSPPQG). Residues 100–116 (GSGGASGSGPRGKGSDG) show a composition bias toward gly residues. Low complexity-rich tracts occupy residues 117–126 (GASSSGNVSG) and 134–147 (GGSR…GSSG). Over residues 148-161 (PEKEEGKKVRRQWE) the composition is skewed to basic and acidic residues. The region spanning 158-221 (RQWESWSTED…FYYRTWHKIT (64 aa)) is the SANT domain. S304 carries the post-translational modification Phosphoserine. 6 disordered regions span residues 456 to 519 (GQLK…GPHL), 579 to 673 (RADT…VPAS), 766 to 843 (NTAS…SDSD), 994 to 1055 (SSGI…SPAL), 1068 to 1107 (GLSI…LSQG), and 1132 to 1172 (PLSP…YPSD). Low complexity predominate over residues 479-503 (ASQSSGESSPESAPAEGAAPSLSSP). Composition is skewed to basic and acidic residues over residues 505 to 519 (APDR…GPHL) and 579 to 589 (RADTRSGREHP). 2 stretches are compositionally biased toward polar residues: residues 654-664 (EHLSSQGQPAT) and 766-784 (NTAS…STTP). The segment covering 792–803 (NSRSPRCSRNPS) has biased composition (low complexity). A compositionally biased stretch (polar residues) spans 804-813 (TLRSNKTFPS). Residues 833-843 (GPSSTGSSDSD) show a composition bias toward low complexity. Residues 994-1012 (SSGISPLSSEQATTAISGQ) show a composition bias toward polar residues. 2 stretches are compositionally biased toward low complexity: residues 1069–1086 (LSIP…LSPP) and 1141–1156 (SDSS…SPQP). S1284 carries the phosphoserine modification.

Belongs to the cramped family.

The protein localises to the nucleus. The sequence is that of Protein cramped-like from Mus musculus (Mouse).